Reading from the N-terminus, the 1412-residue chain is DNA-directed RNA polymerase subunit beta' (1412 aa).

Cys-70, Cys-72, Cys-85, and Cys-88 together coordinate Zn(2+). Mg(2+) contacts are provided by Asp-460, Asp-462, and Asp-464. Zn(2+) contacts are provided by Cys-819, Cys-893, Cys-900, and Cys-903. A disordered region spans residues 1393–1412 (EAFEFGTPSAPAEEPQHPAE).

It belongs to the RNA polymerase beta' chain family. The RNAP catalytic core consists of 2 alpha, 1 beta, 1 beta' and 1 omega subunit. When a sigma factor is associated with the core the holoenzyme is formed, which can initiate transcription. Mg(2+) serves as cofactor. Requires Zn(2+) as cofactor.

It catalyses the reaction RNA(n) + a ribonucleoside 5'-triphosphate = RNA(n+1) + diphosphate. Its function is as follows. DNA-dependent RNA polymerase catalyzes the transcription of DNA into RNA using the four ribonucleoside triphosphates as substrates. The sequence is that of DNA-directed RNA polymerase subunit beta' from Burkholderia mallei (strain NCTC 10229).